Consider the following 273-residue polypeptide: MKKTQTWIITCIYLQLLLFNPLVKTQEICRNPVTDNVKDITKLVANLPNDYMITLNYVAGMDVLPSHCWLRDMVTHLSVSLTTLLDKFSNISEGLSNYSIIDKLGKIVDDLVACMEENAPKNVKESLKKPETRNFTPEEFFSIFNRSIDAFKDFMVASDTSDCVLSSTLGPEKDSRVSVTKPFMLPPVAASSLRNDSSSSNRKAAKSPEDPGLQWTAMALPALISLVIGFAFGALYWKKKQSSLTRAVENIQINEEDNEISMLQQKEREFQEV.

A signal peptide spans 1–25; sequence MKKTQTWIITCIYLQLLLFNPLVKT. A Pyrrolidone carboxylic acid modification is found at glutamine 26. Over 26-214 the chain is Extracellular; the sequence is QEICRNPVTD…AKSPEDPGLQ (189 aa). 2 disulfide bridges follow: cysteine 29/cysteine 114 and cysteine 68/cysteine 163. N-linked (GlcNAc...) asparagine; partial glycosylation occurs at asparagine 90. N-linked (GlcNAc...) asparagine glycosylation is present at asparagine 145. O-linked (GalNAc...) serine glycosylation is present at serine 167. O-linked (GalNAc...) threonine glycans are attached at residues threonine 168 and threonine 180. The disordered stretch occupies residues 190–211; the sequence is ASSLRNDSSSSNRKAAKSPEDP. Low complexity predominate over residues 191 to 202; that stretch reads SSLRNDSSSSNR. A glycan (N-linked (GlcNAc...) asparagine) is linked at asparagine 195. A helical membrane pass occupies residues 215-237; the sequence is WTAMALPALISLVIGFAFGALYW. Topologically, residues 238-273 are cytoplasmic; that stretch reads KKKQSSLTRAVENIQINEEDNEISMLQQKEREFQEV.

This sequence belongs to the SCF family. Homodimer, non-covalently linked. Heterotetramer with KIT, binding two KIT molecules; thereby mediates KIT dimerization and subsequent activation by autophosphorylation. Post-translationally, a soluble form is produced by proteolytic processing of isoform 1 in the extracellular domain. In terms of processing, the identity of N- and O-linked saccharides is not reported in PubMed:1708771. The O-linked polysaccharides are probably the mucin type linked to GalNAc.

It localises to the cell membrane. The protein resides in the cytoplasm. It is found in the cytoskeleton. The protein localises to the cell projection. Its subcellular location is the lamellipodium. It localises to the filopodium. The protein resides in the secreted. In terms of biological role, ligand for the receptor-type protein-tyrosine kinase KIT. Plays an essential role in the regulation of cell survival and proliferation, hematopoiesis, stem cell maintenance, gametogenesis, mast cell development, migration and function, and in melanogenesis. KITLG/SCF binding can activate several signaling pathways. Promotes phosphorylation of PIK3R1, the regulatory subunit of phosphatidylinositol 3-kinase, and subsequent activation of the kinase AKT1. KITLG/SCF and KIT also transmit signals via GRB2 and activation of RAS, RAF1 and the MAP kinases MAPK1/ERK2 and/or MAPK3/ERK1. KITLG/SCF and KIT promote activation of STAT family members STAT1, STAT3 and STAT5. KITLG/SCF and KIT promote activation of PLCG1, leading to the production of the cellular signaling molecules diacylglycerol and inositol 1,4,5-trisphosphate. KITLG/SCF acts synergistically with other cytokines, probably interleukins. This is Kit ligand (Kitlg) from Rattus norvegicus (Rat).